Here is a 305-residue protein sequence, read N- to C-terminus: Glycine--tRNA ligase alpha subunit (305 aa).

This sequence belongs to the class-II aminoacyl-tRNA synthetase family. In terms of assembly, tetramer of two alpha and two beta subunits.

The protein localises to the cytoplasm. It catalyses the reaction tRNA(Gly) + glycine + ATP = glycyl-tRNA(Gly) + AMP + diphosphate. The protein is Glycine--tRNA ligase alpha subunit of Streptococcus mutans serotype c (strain ATCC 700610 / UA159).